The chain runs to 138 residues: Large ribosomal subunit protein uL16 (138 aa).

A compositionally biased stretch (basic residues) spans 1 to 15; that stretch reads MLSPKKVKYRKKQRG. The segment at 1 to 21 is disordered; the sequence is MLSPKKVKYRKKQRGRLSGEA.

Belongs to the universal ribosomal protein uL16 family. Part of the 50S ribosomal subunit.

In terms of biological role, binds 23S rRNA and is also seen to make contacts with the A and possibly P site tRNAs. The chain is Large ribosomal subunit protein uL16 from Borreliella afzelii (strain PKo) (Borrelia afzelii).